Here is a 109-residue protein sequence, read N- to C-terminus: UPF0060 membrane protein mma_0129 (109 aa).

4 helical membrane passes run 7–27 (VALF…PYLW), 31–51 (GASI…VWLL), 63–83 (AAYG…VDGI), and 87–107 (NWDF…LFAP).

Belongs to the UPF0060 family.

Its subcellular location is the cell inner membrane. This is UPF0060 membrane protein mma_0129 from Janthinobacterium sp. (strain Marseille) (Minibacterium massiliensis).